A 335-amino-acid polypeptide reads, in one-letter code: Glucokinase (335 aa).

Position 11 to 16 (11 to 16 (ADIGGT)) interacts with ATP.

Belongs to the bacterial glucokinase family.

It is found in the cytoplasm. The catalysed reaction is D-glucose + ATP = D-glucose 6-phosphate + ADP + H(+). In Xanthomonas oryzae pv. oryzae (strain MAFF 311018), this protein is Glucokinase.